We begin with the raw amino-acid sequence, 357 residues long: uncharacterized protein (357 aa).

A DNA-binding region (zn(2)-C6 fungal-type) is located at residues 6 to 32 (CIVCRQKKIKCDRKNPCTNCEQAGEKC).

Its subcellular location is the nucleus. This is an uncharacterized protein from Schizosaccharomyces pombe (strain 972 / ATCC 24843) (Fission yeast).